Consider the following 475-residue polypeptide: Protein EARLY HEADING DATE 2 (475 aa).

Residues 1–16 (MLLSDLSSDQEATGSN) show a composition bias toward polar residues. The tract at residues 1-26 (MLLSDLSSDQEATGSNSHGGGGGDRM) is disordered. 2 C2H2-type zinc fingers span residues 105 to 127 (FVCE…RRGH) and 155 to 185 (YVCP…SRKH). 2 consecutive short sequence motifs (nuclear localization signal) follow at residues 123–130 (HRRGHNLP) and 177–184 (IKKHFSRK). The C2H2-type 2; degenerate zinc finger occupies 190–213 (WRCERCGKRYAVHSDWKAHVKNCG). Residues Cys-192, Cys-195, His-208, Cys-212, Cys-219, Cys-221, His-234, and Cys-238 each contribute to the Zn(2+) site. The CCHC-type 2; atypical zinc finger occupies 217-240 (YRCDCGILFSRKDSLLTHRAFCDA). Residues 227–239 (RKDSLLTHRAFCD) form an SHR-binding region.

Mostly expressed in developing leaves (more in sheaths than in blades, especially in the outer epidermal cell of immature leaves and in the region immediately beneath the meristem where internodes are visible) and panicles, and, at very low levels, around the shoot apex and in roots.

It localises to the nucleus. In terms of biological role, transcription activator that acts as a flowering master switch in both long and short days, independently of the circadian clock. Promotes flowering upstream of HD1 by up-regulating FTL1, FTL4, FTL5, FTL6, EHD1, HD3A and RFT1. Seems to repress FTL11 expression. May recognize the consensus motif 5'-TTTGTCGTAAT-3' in target gene promoters. This chain is Protein EARLY HEADING DATE 2, found in Oryza sativa subsp. japonica (Rice).